The following is an 84-amino-acid chain: uncharacterized protein (84 aa).

The protein belongs to the chlamydial CPn_0710/CT_666/TC_0037 family.

This is an uncharacterized protein from Chlamydia pneumoniae (Chlamydophila pneumoniae).